The following is a 193-amino-acid chain: Cysteine and glycine-rich protein 2 (193 aa).

Residues 10-61 (CGACGRTVYHAEEVQCDGRTFHRCCFLCMVCRKNLDSTTVAIHDEEIYCKSC) enclose the LIM zinc-binding 1 domain. A Nuclear localization signal motif is present at residues 64-69 (KKYGPK). K91 is covalently cross-linked (Glycyl lysine isopeptide (Lys-Gly) (interchain with G-Cter in SUMO2)). K112 and K131 each carry N6-acetyllysine. The 52-residue stretch at 119–170 (CSRCGDSVYAAEKIIGAGKPWHKNCFRCAKCGKSLESTTLTEKEGEIYCKGC) folds into the LIM zinc-binding 2 domain. K137 is subject to N6-acetyllysine; alternate. Position 137 is an N6-succinyllysine; alternate (K137). N6-acetyllysine is present on K161.

As to quaternary structure, interacts with KAT14. The LIM domain 1 is necessary and sufficient for this interaction. Interacts with GLRX3. In terms of tissue distribution, highly expressed in the aorta; weakly found in the kidney, thymus, and intestine. Barely detectable in brain, testis, esophagus, lung, liver, aortic adventitia, vena cava, or uterus; not present in heart and skeletal muscle.

The protein localises to the nucleus. Functionally, drastically down-regulated in response to PDGF-BB or cell injury, that promote smooth muscle cell proliferation and dedifferentiation. Seems to play a role in the development of the embryonic vascular system. This chain is Cysteine and glycine-rich protein 2 (Csrp2), found in Rattus norvegicus (Rat).